A 464-amino-acid polypeptide reads, in one-letter code: Mothers against decapentaplegic homolog 5 (464 aa).

Positions 13–137 constitute an MH1 domain; it reads PAVKRLLGWK…YKRVESPVLP (125 aa). Residues Cys-65, Cys-110, Cys-122, and His-127 each coordinate Zn(2+). Residues 166–258 form a disordered region; sequence HMPLNATFPE…LAPQNMPRGD (93 aa). Residues 173–183 show a composition bias toward polar residues; the sequence is FPESFQQHSGG. Over residues 199–216 the composition is skewed to low complexity; the sequence is ASSGTYPNSPASSGPSSP. The segment covering 237 to 251 has biased composition (polar residues); the sequence is QDGSQSMETGSSLAP. Residues 270 to 464 form the MH2 domain; sequence WCSIVYYELN…SPLNPISSVS (195 aa).

Belongs to the dwarfin/SMAD family. As to quaternary structure, may form trimers with the co-SMAD SMAD4.

Its subcellular location is the cytoplasm. It localises to the nucleus. In terms of biological role, involved in ventralization. May mediate Bmp2b signaling during early phases of embryonic dorsal-ventral pattern formation. Required for initiation of Smad1 expression during gastrulation. This is Mothers against decapentaplegic homolog 5 (smad5) from Danio rerio (Zebrafish).